Reading from the N-terminus, the 186-residue chain is Ribosome rescue factor SmrB (186 aa).

The Smr domain occupies 99–174; it reads IDLHGLTQHQ…SDAAIIVIIE (76 aa).

This sequence belongs to the SmrB family. As to quaternary structure, associates with collided ribosomes, but not with correctly translating polysomes.

Acts as a ribosome collision sensor. Detects stalled/collided disomes (pairs of ribosomes where the leading ribosome is stalled and a second ribosome has collided with it) and endonucleolytically cleaves mRNA at the 5' boundary of the stalled ribosome. Stalled/collided disomes form a new interface (primarily via the 30S subunits) that binds SmrB. Cleaved mRNA becomes available for tmRNA ligation, leading to ribosomal subunit dissociation and rescue of stalled ribosomes. In Buchnera aphidicola subsp. Acyrthosiphon pisum (strain Tuc7), this protein is Ribosome rescue factor SmrB.